Here is a 195-residue protein sequence, read N- to C-terminus: uncharacterized protein (195 aa).

Positions 34–165 (SHHAAVLIPI…WLDIHRGGVN (132 aa)) constitute a Nudix hydrolase domain. Positions 72-94 (GKADPQDSSLIETALREAEEEVA) match the Nudix box motif. The Mg(2+) site is built by glutamate 88 and glutamate 92.

Belongs to the Nudix hydrolase family. PCD1 subfamily. Requires Mn(2+) as cofactor. Mg(2+) serves as cofactor.

Its function is as follows. Probably mediates the hydrolysis of some nucleoside diphosphate derivatives. This is an uncharacterized protein from Yersinia enterocolitica serotype O:8 / biotype 1B (strain NCTC 13174 / 8081).